Here is a 262-residue protein sequence, read N- to C-terminus: Glycoprotein gp2 (262 aa).

A disordered region spans residues 1–45 (RRGSPQGGSHTTPHPDRLTPSPDDTYDDDTNHPNGRNNSIEIVPQ).

Its subcellular location is the virion membrane. Functionally, virulence factor. This Equus caballus (Horse) protein is Glycoprotein gp2.